The following is a 446-amino-acid chain: Tubulin beta chain (446 aa).

Gln-11, Glu-69, Ser-138, Gly-142, Thr-143, Gly-144, Asn-204, and Asn-226 together coordinate GTP. Glu-69 is a Mg(2+) binding site. Positions 421 to 446 (EYQQYQDAGIDEEEEEYEEELPEGEE) are disordered. The span at 429-446 (GIDEEEEEYEEELPEGEE) shows a compositional bias: acidic residues.

The protein belongs to the tubulin family. Dimer of alpha and beta chains. A typical microtubule is a hollow water-filled tube with an outer diameter of 25 nm and an inner diameter of 15 nM. Alpha-beta heterodimers associate head-to-tail to form protofilaments running lengthwise along the microtubule wall with the beta-tubulin subunit facing the microtubule plus end conferring a structural polarity. Microtubules usually have 13 protofilaments but different protofilament numbers can be found in some organisms and specialized cells. Mg(2+) serves as cofactor.

Its subcellular location is the cytoplasm. It is found in the cytoskeleton. Its function is as follows. Tubulin is the major constituent of microtubules, a cylinder consisting of laterally associated linear protofilaments composed of alpha- and beta-tubulin heterodimers. Microtubules grow by the addition of GTP-tubulin dimers to the microtubule end, where a stabilizing cap forms. Below the cap, tubulin dimers are in GDP-bound state, owing to GTPase activity of alpha-tubulin. The chain is Tubulin beta chain (TUB2) from Fusarium fujikuroi (Bakanae and foot rot disease fungus).